Reading from the N-terminus, the 346-residue chain is 4-hydroxy-3-methylbut-2-enyl diphosphate reductase (346 aa).

A [4Fe-4S] cluster-binding site is contributed by C19. Positions 48 and 84 each coordinate (2E)-4-hydroxy-3-methylbut-2-enyl diphosphate. The dimethylallyl diphosphate site is built by H48 and H84. Isopentenyl diphosphate-binding residues include H48 and H84. Residue C106 participates in [4Fe-4S] cluster binding. H134 serves as a coordination point for (2E)-4-hydroxy-3-methylbut-2-enyl diphosphate. H134 provides a ligand contact to dimethylallyl diphosphate. H134 lines the isopentenyl diphosphate pocket. The active-site Proton donor is E136. T175 contacts (2E)-4-hydroxy-3-methylbut-2-enyl diphosphate. Position 205 (C205) interacts with [4Fe-4S] cluster. Residues S233, S234, N235, and S278 each contribute to the (2E)-4-hydroxy-3-methylbut-2-enyl diphosphate site. Dimethylallyl diphosphate contacts are provided by S233, S234, N235, and S278. Positions 233, 234, 235, and 278 each coordinate isopentenyl diphosphate.

It belongs to the IspH family. It depends on [4Fe-4S] cluster as a cofactor.

The catalysed reaction is isopentenyl diphosphate + 2 oxidized [2Fe-2S]-[ferredoxin] + H2O = (2E)-4-hydroxy-3-methylbut-2-enyl diphosphate + 2 reduced [2Fe-2S]-[ferredoxin] + 2 H(+). The enzyme catalyses dimethylallyl diphosphate + 2 oxidized [2Fe-2S]-[ferredoxin] + H2O = (2E)-4-hydroxy-3-methylbut-2-enyl diphosphate + 2 reduced [2Fe-2S]-[ferredoxin] + 2 H(+). It participates in isoprenoid biosynthesis; dimethylallyl diphosphate biosynthesis; dimethylallyl diphosphate from (2E)-4-hydroxy-3-methylbutenyl diphosphate: step 1/1. Its pathway is isoprenoid biosynthesis; isopentenyl diphosphate biosynthesis via DXP pathway; isopentenyl diphosphate from 1-deoxy-D-xylulose 5-phosphate: step 6/6. Functionally, catalyzes the conversion of 1-hydroxy-2-methyl-2-(E)-butenyl 4-diphosphate (HMBPP) into a mixture of isopentenyl diphosphate (IPP) and dimethylallyl diphosphate (DMAPP). Acts in the terminal step of the DOXP/MEP pathway for isoprenoid precursor biosynthesis. This chain is 4-hydroxy-3-methylbut-2-enyl diphosphate reductase, found in Brucella melitensis biotype 1 (strain ATCC 23456 / CCUG 17765 / NCTC 10094 / 16M).